Here is a 281-residue protein sequence, read N- to C-terminus: UDP-N-acetylenolpyruvoylglucosamine reductase (281 aa).

Residues 17–180 (VGGKAKKLII…LSATFKFDNG (164 aa)) form the FAD-binding PCMH-type domain. The active site involves arginine 159. The Proton donor role is filled by serine 206. Residue glutamate 276 is part of the active site.

This sequence belongs to the MurB family. FAD serves as cofactor.

It is found in the cytoplasm. It carries out the reaction UDP-N-acetyl-alpha-D-muramate + NADP(+) = UDP-N-acetyl-3-O-(1-carboxyvinyl)-alpha-D-glucosamine + NADPH + H(+). The protein operates within cell wall biogenesis; peptidoglycan biosynthesis. In terms of biological role, cell wall formation. The polypeptide is UDP-N-acetylenolpyruvoylglucosamine reductase (Fusobacterium nucleatum subsp. nucleatum (strain ATCC 25586 / DSM 15643 / BCRC 10681 / CIP 101130 / JCM 8532 / KCTC 2640 / LMG 13131 / VPI 4355)).